The chain runs to 284 residues: uncharacterized protein (284 aa).

A signal peptide spans 1 to 23; that stretch reads MKRGCAIAVMICGLITSVSAASA.

Belongs to the surface antigen msp4 family.

This is an uncharacterized protein from Brucella abortus (strain 2308).